We begin with the raw amino-acid sequence, 404 residues long: uncharacterized protein (404 aa).

A compositionally biased stretch (polar residues) spans V262–A278. 2 disordered regions span residues V262–L307 and M319–D340. A phosphoserine mark is found at S268, S276, and S279. Phosphothreonine occurs at positions 290 and 293. A phosphoserine mark is found at S304, S306, S324, S358, and S362. Basic and acidic residues predominate over residues M319–D336.

This is an uncharacterized protein from Mus musculus (Mouse).